The following is a 256-amino-acid chain: Beta-fibrinogenase-like (256 aa).

The first 18 residues, 1-18 (MVLIKVLANLLVLQLSYA), serve as a signal peptide directing secretion. Residues 19–24 (QKSSEL) constitute a propeptide that is removed on maturation. The Peptidase S1 domain occupies 25–247 (VVGGDECNIN…YTDWIQSIIA (223 aa)). 6 cysteine pairs are disulfide-bonded: cysteine 31–cysteine 161, cysteine 49–cysteine 65, cysteine 96–cysteine 254, cysteine 140–cysteine 208, cysteine 172–cysteine 187, and cysteine 198–cysteine 223. Residue asparagine 44 is glycosylated (N-linked (GlcNAc...) asparagine). Catalysis depends on histidine 64, which acts as the Charge relay system. Asparagine 78 and asparagine 101 each carry an N-linked (GlcNAc...) asparagine glycan. Residue aspartate 108 is the Charge relay system of the active site. Asparagine 152 carries N-linked (GlcNAc...) asparagine glycosylation. Serine 202 acts as the Charge relay system in catalysis.

This sequence belongs to the peptidase S1 family. Snake venom subfamily. As to quaternary structure, monomer. Expressed by the venom gland.

It localises to the secreted. Its function is as follows. Snake venom serine protease that has fibrinogenolytic activities by hydrolyzing the beta chain of fibrinogen (FGB). Typical arginine esterase which hydrolyzes esters and amides of arginine. The chain is Beta-fibrinogenase-like from Daboia siamensis (Eastern Russel's viper).